We begin with the raw amino-acid sequence, 467 residues long: Cysteine protease ATG4a (467 aa).

Residues 1 to 35 (MKALCDRFVPQQCSSSSKSDTHDKSPLVSDSGPSD) are disordered. Cys-170 functions as the Nucleophile in the catalytic mechanism. Residues Asp-364 and His-366 contribute to the active site. The tract at residues 448–467 (NYGFADDDSEDEREDDWQML) is disordered. Over residues 452–467 (ADDDSEDEREDDWQML) the composition is skewed to acidic residues.

The protein belongs to the peptidase C54 family. In terms of assembly, interacts with ATG8. Constitutively expressed.

The protein localises to the cytoplasm. The enzyme catalyses [protein]-C-terminal L-amino acid-glycyl-phosphatidylethanolamide + H2O = [protein]-C-terminal L-amino acid-glycine + a 1,2-diacyl-sn-glycero-3-phosphoethanolamine. Functionally, cysteine protease that plays a key role in autophagy by mediating both proteolytic activation and delipidation of ATG8 family proteins. The protease activity is required for proteolytic activation of ATG8 family proteins: cleaves the C-terminal amino acid of ATG8 proteins to reveal a C-terminal glycine. Exposure of the glycine at the C-terminus is essential for ATG8 proteins conjugation to phosphatidylethanolamine (PE) and insertion to membranes, which is necessary for autophagy. In addition to the protease activity, also mediates delipidation of PE-conjugated ATG8 proteins. The sequence is that of Cysteine protease ATG4a from Arabidopsis thaliana (Mouse-ear cress).